The chain runs to 348 residues: Protein RecA (348 aa).

Residue 65–72 (GPESSGKT) coordinates ATP.

Belongs to the RecA family.

The protein localises to the cytoplasm. Functionally, can catalyze the hydrolysis of ATP in the presence of single-stranded DNA, the ATP-dependent uptake of single-stranded DNA by duplex DNA, and the ATP-dependent hybridization of homologous single-stranded DNAs. It interacts with LexA causing its activation and leading to its autocatalytic cleavage. The sequence is that of Protein RecA from Vibrio anguillarum (Listonella anguillarum).